The primary structure comprises 66 residues: Beta-toxin Ct71 (66 aa).

The 66-residue stretch at 1 to 66 (KEGYIVNYHD…VWPLPKKTCN (66 aa)) folds into the LCN-type CS-alpha/beta domain. 4 cysteine pairs are disulfide-bonded: Cys12–Cys65, Cys16–Cys41, Cys25–Cys46, and Cys29–Cys48. Asn66 is subject to Asparagine amide.

It belongs to the long (4 C-C) scorpion toxin superfamily. Sodium channel inhibitor family. Beta subfamily. Expressed by the venom gland.

The protein localises to the secreted. Its function is as follows. Beta toxins bind voltage-independently at site-4 of sodium channels (Nav) and shift the voltage of activation toward more negative potentials thereby affecting sodium channel activation and promoting spontaneous and repetitive firing. Lethal to mice. This is Beta-toxin Ct71 from Centruroides tecomanus (Scorpion).